Consider the following 316-residue polypeptide: 4-amino-5-hydroxymethyl-2-methylpyrimidine phosphate synthase (316 aa).

An N6-(pyridoxal phosphate)lysine modification is found at lysine 66. Histidine 70 is a catalytic residue. Position 118–121 (118–121 (GEFG)) interacts with pyridoxal 5'-phosphate. The short motif at 191–195 (CCCFC) is the CCCFC; essential for catalytic activity, may be the site of iron coordination element.

It belongs to the NMT1/THI5 family. Homodimer. The cofactor is Fe cation.

It carries out the reaction N(6)-(pyridoxal phosphate)-L-lysyl-[4-amino-5-hydroxymethyl-2-methylpyrimidine phosphate synthase] + L-histidyl-[4-amino-5-hydroxymethyl-2-methylpyrimidine phosphate synthase] + 2 Fe(3+) + 4 H2O = L-lysyl-[4-amino-5-hydroxymethyl-2-methylpyrimidine phosphate synthase] + (2S)-2-amino-5-hydroxy-4-oxopentanoyl-[4-amino-5-hydroxymethyl-2-methylpyrimidine phosphate synthase] + 4-amino-2-methyl-5-(phosphooxymethyl)pyrimidine + 3-oxopropanoate + 2 Fe(2+) + 2 H(+). Its pathway is cofactor biosynthesis; thiamine diphosphate biosynthesis. Its function is as follows. Responsible for the formation of the pyrimidine heterocycle in the thiamine biosynthesis pathway. Catalyzes the formation of hydroxymethylpyrimidine phosphate (HMP-P) from histidine and pyridoxal phosphate (PLP). The protein uses PLP and the active site histidine to form HMP-P, generating an inactive enzyme. The enzyme can only undergo a single turnover, which suggests it is a suicide enzyme. The chain is 4-amino-5-hydroxymethyl-2-methylpyrimidine phosphate synthase from Legionella pneumophila subsp. pneumophila (strain Philadelphia 1 / ATCC 33152 / DSM 7513).